Consider the following 354-residue polypeptide: tRNA-specific 2-thiouridylase MnmA (354 aa).

Residues 6–13 (LLSGGVDS) and Leu-33 each bind ATP. The active-site Nucleophile is the Cys-100. A disulfide bond links Cys-100 and Cys-195. Residue Gly-123 coordinates ATP. Positions 145-147 (KDQ) are interaction with tRNA. Catalysis depends on Cys-195, which acts as the Cysteine persulfide intermediate.

The protein belongs to the MnmA/TRMU family.

The protein resides in the cytoplasm. It catalyses the reaction S-sulfanyl-L-cysteinyl-[protein] + uridine(34) in tRNA + AH2 + ATP = 2-thiouridine(34) in tRNA + L-cysteinyl-[protein] + A + AMP + diphosphate + H(+). In terms of biological role, catalyzes the 2-thiolation of uridine at the wobble position (U34) of tRNA, leading to the formation of s(2)U34. The polypeptide is tRNA-specific 2-thiouridylase MnmA (Borrelia duttonii (strain Ly)).